Reading from the N-terminus, the 95-residue chain is Scorpine-like peptide Smp76 (95 aa).

Positions 1 to 19 (MNCKLTALLFLGLIVIASC) are cleaved as a signal peptide. One can recognise a BetaSPN-type CS-alpha/beta domain in the interval 55-95 (EFQCVANVDTLGNCKKHCAKTTGEKGYCHGTKCKCGIELSY). 3 cysteine pairs are disulfide-bonded: C58–C82, C68–C87, and C72–C89.

Disulfide bonds are critical for antiviral function, and their disruption inhibit viral activity. Expressed by the venom gland.

Its subcellular location is the secreted. Antibacterial peptide. Dose-dependently inhibits Dengue virus (DENV), Zika virus (ZIKV) and Hepatitis C virus (HCV) infections. Two mechanisms of action have been described by two different groups: one involving activity on extracellular particles, and the other regulating the immune system. On Dengue virus (DENV), Zika virus (ZIKV), suppress the established viral infection, similar to the effect of interferon (IFN)-beta. Mechanistically, upregulates the expression of IFN-beta by activating interferon regulatory transcription factor 3 (IRF3) phosphorylation. On HCV and DENV, acts by inactivating extra-cellular infectious particles without affecting viral replication. Shows very weak inhibition on measles virus. Is neither toxic nor hemolytic in vitro at high concentrations. The polypeptide is Scorpine-like peptide Smp76 (Scorpio palmatus (Israeli golden scorpion)).